A 396-amino-acid chain; its full sequence is Phosphoglycerate kinase (396 aa).

Residues 21 to 23, Arg-36, 59 to 62, Arg-119, and Arg-156 each bind substrate; these read DFN and HLGK. Residues Lys-206, Gly-294, Glu-325, and 352–355 each bind ATP; that span reads GGDS.

It belongs to the phosphoglycerate kinase family. In terms of assembly, monomer.

It localises to the cytoplasm. The catalysed reaction is (2R)-3-phosphoglycerate + ATP = (2R)-3-phospho-glyceroyl phosphate + ADP. Its pathway is carbohydrate degradation; glycolysis; pyruvate from D-glyceraldehyde 3-phosphate: step 2/5. This Staphylococcus aureus (strain bovine RF122 / ET3-1) protein is Phosphoglycerate kinase.